Consider the following 229-residue polypeptide: DNA mismatch repair protein MutH (229 aa).

The protein belongs to the MutH family.

Its subcellular location is the cytoplasm. Functionally, sequence-specific endonuclease that cleaves unmethylated GATC sequences. It is involved in DNA mismatch repair. The protein is DNA mismatch repair protein MutH of Escherichia coli O127:H6 (strain E2348/69 / EPEC).